Here is a 714-residue protein sequence, read N- to C-terminus: DNA ligase (714 aa).

Residues 47-51, 96-97, and Glu130 each bind NAD(+); these read DAAYD and SL. Lys132 (N6-AMP-lysine intermediate) is an active-site residue. Residues Arg153, Glu190, Lys306, and Lys330 each contribute to the NAD(+) site. Zn(2+)-binding residues include Cys435, Cys438, Cys453, and Cys459. In terms of domain architecture, BRCT spans 636-714; the sequence is RNDSAVAGKT…EDEWLKLIEG (79 aa).

The protein belongs to the NAD-dependent DNA ligase family. LigA subfamily. The cofactor is Mg(2+). It depends on Mn(2+) as a cofactor.

It catalyses the reaction NAD(+) + (deoxyribonucleotide)n-3'-hydroxyl + 5'-phospho-(deoxyribonucleotide)m = (deoxyribonucleotide)n+m + AMP + beta-nicotinamide D-nucleotide.. Its function is as follows. DNA ligase that catalyzes the formation of phosphodiester linkages between 5'-phosphoryl and 3'-hydroxyl groups in double-stranded DNA using NAD as a coenzyme and as the energy source for the reaction. It is essential for DNA replication and repair of damaged DNA. In Nitrobacter hamburgensis (strain DSM 10229 / NCIMB 13809 / X14), this protein is DNA ligase.